Here is a 206-residue protein sequence, read N- to C-terminus: MHLSEGVLHTPILLAGAVLAVAGIAVGLRRLESERLPLTALFAAAFFVAGTIHVPVGIGSVHLILNGMAGLFLGWAVFPAFLIALLLQVIFFSFGGFAVLGVNLCVMATPAVIAHYLFRSRLQPQMALKDRLLVGIGAGVIGVGGAGALASFVLMLDGGKSYLNLVWLLLVSHIPVFILDSIISVGVITLLGKMYPEVMNRTENFS.

The next 6 membrane-spanning stretches (helical) occupy residues 6 to 26 (GVLH…GIAV), 38 to 58 (LTAL…PVGI), 72 to 92 (FLGW…VIFF), 94 to 114 (FGGF…AVIA), 136 to 156 (IGAG…VLML), and 165 to 185 (LVWL…IISV).

It belongs to the CbiM family.

Its subcellular location is the cell membrane. May be involved in metal transport. This chain is Putative metal transport protein HI_1621, found in Haemophilus influenzae (strain ATCC 51907 / DSM 11121 / KW20 / Rd).